Consider the following 118-residue polypeptide: Dihydroneopterin aldolase (118 aa).

Residues glutamate 21, tyrosine 53, and 72 to 73 (IE) each bind substrate. Catalysis depends on lysine 98, which acts as the Proton donor/acceptor.

This sequence belongs to the DHNA family.

It carries out the reaction 7,8-dihydroneopterin = 6-hydroxymethyl-7,8-dihydropterin + glycolaldehyde. It catalyses the reaction 7,8-dihydroneopterin = 7,8-dihydromonapterin. It participates in cofactor biosynthesis; tetrahydrofolate biosynthesis; 2-amino-4-hydroxy-6-hydroxymethyl-7,8-dihydropteridine diphosphate from 7,8-dihydroneopterin triphosphate: step 3/4. Its function is as follows. Catalyzes the conversion of 7,8-dihydroneopterin to 6-hydroxymethyl-7,8-dihydropterin. Can use L-threo-dihydroneopterin and D-erythro-dihydroneopterin as substrates for the formation of 6-hydroxymethyldihydropterin, but it can also catalyze the epimerization of carbon 2' of dihydroneopterin to dihydromonapterin. This Haemophilus influenzae (strain ATCC 51907 / DSM 11121 / KW20 / Rd) protein is Dihydroneopterin aldolase (folB).